The following is a 287-amino-acid chain: Pyridoxal kinase PdxY (287 aa).

Substrate-binding positions include Ser-10 and Thr-45 to Gln-46. Residues Asp-112, Ala-144, Glu-149, Lys-182, and Arg-209–Val-212 contribute to the ATP site. Asp-224 lines the substrate pocket.

The protein belongs to the pyridoxine kinase family. PdxY subfamily. Homodimer. Requires Mg(2+) as cofactor.

It catalyses the reaction pyridoxal + ATP = pyridoxal 5'-phosphate + ADP + H(+). It participates in cofactor metabolism; pyridoxal 5'-phosphate salvage; pyridoxal 5'-phosphate from pyridoxal: step 1/1. Pyridoxal kinase involved in the salvage pathway of pyridoxal 5'-phosphate (PLP). Catalyzes the phosphorylation of pyridoxal to PLP. The chain is Pyridoxal kinase PdxY from Shigella boydii serotype 4 (strain Sb227).